The following is a 202-amino-acid chain: Peptide methionine sulfoxide reductase A1 (202 aa).

A disordered region spans residues 1-20 (MNILNKLGIGSSRQTNMDPS). Serine 189 bears the Phosphoserine mark.

Belongs to the MsrA Met sulfoxide reductase family.

Its subcellular location is the cytoplasm. The protein resides in the cytosol. The enzyme catalyses L-methionyl-[protein] + [thioredoxin]-disulfide + H2O = L-methionyl-(S)-S-oxide-[protein] + [thioredoxin]-dithiol. It carries out the reaction [thioredoxin]-disulfide + L-methionine + H2O = L-methionine (S)-S-oxide + [thioredoxin]-dithiol. In terms of biological role, catalyzes the reduction of methionine sulfoxide (MetSO) to methionine in proteins. Plays a protective role against oxidative stress by restoring activity to proteins that have been inactivated by methionine oxidation. MSRA family specifically reduces the MetSO S-enantiomer. In Arabidopsis thaliana (Mouse-ear cress), this protein is Peptide methionine sulfoxide reductase A1 (MSRA1).